Here is a 164-residue protein sequence, read N- to C-terminus: 3-dehydroquinate dehydratase (164 aa).

The active-site Proton acceptor is the Tyr22. Residues Asn73, His79, and Asp86 each contribute to the substrate site. The active-site Proton donor is the His99. Residues 100 to 101 (IS) and Arg110 each bind substrate.

It belongs to the type-II 3-dehydroquinase family. Homododecamer.

The enzyme catalyses 3-dehydroquinate = 3-dehydroshikimate + H2O. Its pathway is metabolic intermediate biosynthesis; chorismate biosynthesis; chorismate from D-erythrose 4-phosphate and phosphoenolpyruvate: step 3/7. Catalyzes a trans-dehydration via an enolate intermediate. The sequence is that of 3-dehydroquinate dehydratase from Aliarcobacter butzleri (strain RM4018) (Arcobacter butzleri).